An 88-amino-acid polypeptide reads, in one-letter code: Small ribosomal subunit protein bS20 (88 aa).

It belongs to the bacterial ribosomal protein bS20 family.

Its function is as follows. Binds directly to 16S ribosomal RNA. This is Small ribosomal subunit protein bS20 from Clostridium kluyveri (strain NBRC 12016).